Here is a 286-residue protein sequence, read N- to C-terminus: Nucleotide-binding protein PLES_48441 (286 aa).

Residue 8–15 participates in ATP binding; that stretch reads GRSGSGKS. 60–63 provides a ligand contact to GTP; the sequence is DARN.

This sequence belongs to the RapZ-like family.

In terms of biological role, displays ATPase and GTPase activities. The protein is Nucleotide-binding protein PLES_48441 of Pseudomonas aeruginosa (strain LESB58).